A 103-amino-acid polypeptide reads, in one-letter code: Histone H4 (103 aa).

Gly residues predominate over residues 1 to 14 (MSGRGKGGKGLGKG). The disordered stretch occupies residues 1-20 (MSGRGKGGKGLGKGGAKRHR). N6-acetyl-N6-methyllysine; alternate is present on Lys6. N6-methyllysine; alternate occurs at positions 6, 9, and 13. N6-acetyl-N6-methyllysine; alternate is present on Lys13. Residues 17–21 (KRHRK) mediate DNA binding. Lys92 carries the N6-glutaryllysine modification.

It belongs to the histone H4 family. As to quaternary structure, the nucleosome is a histone octamer containing two molecules each of H2A, H2B, H3 and H4 assembled in one H3-H4 heterotetramer and two H2A-H2B heterodimers. The octamer wraps approximately 147 bp of DNA. Post-translationally, glutarylation at Lys-92 (H4K91glu) destabilizes nucleosomes by promoting dissociation of the H2A-H2B dimers from nucleosomes.

It is found in the nucleus. Its subcellular location is the chromosome. Core component of nucleosome. Nucleosomes wrap and compact DNA into chromatin, limiting DNA accessibility to the cellular machineries which require DNA as a template. Histones thereby play a central role in transcription regulation, DNA repair, DNA replication and chromosomal stability. DNA accessibility is regulated via a complex set of post-translational modifications of histones, also called histone code, and nucleosome remodeling. The protein is Histone H4 (HHF1) of Candida glabrata (strain ATCC 2001 / BCRC 20586 / JCM 3761 / NBRC 0622 / NRRL Y-65 / CBS 138) (Yeast).